A 404-amino-acid chain; its full sequence is Cysteine desulfurase IscS (404 aa).

Residues 73–74 (AT), Asn153, Gln181, and 201–203 (SAH) contribute to the pyridoxal 5'-phosphate site. Lys204 is modified (N6-(pyridoxal phosphate)lysine). Position 241 (Thr241) interacts with pyridoxal 5'-phosphate. The active-site Cysteine persulfide intermediate is the Cys327. Residue Cys327 participates in [2Fe-2S] cluster binding.

This sequence belongs to the class-V pyridoxal-phosphate-dependent aminotransferase family. NifS/IscS subfamily. In terms of assembly, homodimer. Forms a heterotetramer with IscU, interacts with other sulfur acceptors. The cofactor is pyridoxal 5'-phosphate.

Its subcellular location is the cytoplasm. The catalysed reaction is (sulfur carrier)-H + L-cysteine = (sulfur carrier)-SH + L-alanine. The protein operates within cofactor biosynthesis; iron-sulfur cluster biosynthesis. In terms of biological role, master enzyme that delivers sulfur to a number of partners involved in Fe-S cluster assembly, tRNA modification or cofactor biosynthesis. Catalyzes the removal of elemental sulfur atoms from cysteine to produce alanine. Functions as a sulfur delivery protein for Fe-S cluster synthesis onto IscU, an Fe-S scaffold assembly protein, as well as other S acceptor proteins. The protein is Cysteine desulfurase IscS of Anaeromyxobacter sp. (strain K).